We begin with the raw amino-acid sequence, 644 residues long: (E2-independent) E3 ubiquitin-conjugating enzyme FATS (644 aa).

Residues 1–67 (MISPVVISRL…LGILTPSDDQ (67 aa)) are required for interaction with p53/TP53. 4 disordered regions span residues 62-83 (TPSD…LGKG), 305-349 (LGSG…SSHT), 367-413 (VLSG…SILS), and 475-507 (NEDP…EDSY). Positions 67–175 (QGLETEPLST…RLSARQDYWV (109 aa)) are required for interaction with HDAC1. The span at 398–410 (EGDSSPSSDGQPS) shows a compositional bias: low complexity. Residues 481-492 (TPEPSPATPSPS) show a composition bias toward pro residues. Residues 516-644 (TLQEALEVHR…LDQLLQRNAV (129 aa)) are ALMS motif. A coiled-coil region spans residues 598–629 (KRIYNNLPEVKKKKEEQKKRMILQSNRLRAEV).

In terms of assembly, interacts with HDAC1; the interaction prevents binding of HDAC1 to CDKN1A/p21 and facilitates the acetylation and stabilization of CDKN1A/p21. Interacts with p53/TP53; the interaction inhibits binding of p53/TP53 and MDM2. Highly expressed in testis. Weak expression found in brain, lung, heart, ovary, thymus, spleen and kidney.

It is found in the cytoplasm. The protein localises to the cytoskeleton. Its subcellular location is the microtubule organizing center. The protein resides in the centrosome. Its function is as follows. Tumor suppressor that is required to sustain G2/M checkpoint after DNA damage. Acts as a p53/TP53 activator by inhibiting MDM2 binding to p53/TP53 and stimulating non-proteolytic polyubiquitination of p53/TP53. Exhibits ubiquitin ligase (E3) activity and assemble ubiquitin polymers through 'Lys-11'- (K11-), 'Lys-29'- (K29-) and 'Lys-63'- (K63)-linkages, independently of the ubiquitin-conjugating enzyme (E2). Promotes p53/TP53-dependent transcription of CDKN1A/p21, leading to robust checkpoint response. Mediates CDKN1A/p21 protein stability in a ubiquitin-independent manner. Interacts with HDAC1 and prevents binding of HDAC1 to CDKN1A/p21 and facilitates the acetylation and stabilization of CDKN1A/p21. May have a role in the assembly of primary cilia. The sequence is that of (E2-independent) E3 ubiquitin-conjugating enzyme FATS from Mus musculus (Mouse).